Here is a 774-residue protein sequence, read N- to C-terminus: Mastermind-like domain-containing protein 1 (774 aa).

Disordered stretches follow at residues serine 257–alanine 279, leucine 310–leucine 365, alanine 386–phenylalanine 421, histidine 442–phenylalanine 473, glycine 525–histidine 609, proline 656–serine 678, and leucine 755–proline 774. Pro residues predominate over residues leucine 331–serine 361. Polar residues predominate over residues alanine 386–alanine 397. Residues glutamine 574 to histidine 609 are compositionally biased toward low complexity. Residues proline 656 to aspartate 669 show a composition bias toward polar residues. Serine 676 carries the post-translational modification Phosphoserine.

It belongs to the mastermind family. In terms of tissue distribution, expressed in fetal brain, fetal ovary and fetal testis. Expressed in adult brain, ovary, skin, testis, uterus. Highly expressed in skeletal muscle.

It localises to the nucleus. Its function is as follows. Transactivates the HES3 promoter independently of NOTCH proteins. HES3 is a non-canonical NOTCH target gene which lacks binding sites for RBPJ. In Homo sapiens (Human), this protein is Mastermind-like domain-containing protein 1 (MAMLD1).